The chain runs to 818 residues: Phenylalanine--tRNA ligase beta subunit (818 aa).

The 110-residue stretch at 39-148 (AAELQKFEVA…EDAVVGENFT (110 aa)) folds into the tRNA-binding domain. Residues 423 to 498 (SQKKPLDFSA…RIYGYDKIES (76 aa)) form the B5 domain. The Mg(2+) site is built by Asp-476, Asp-482, Glu-485, and Glu-486. The FDX-ACB domain maps to 724–817 (SDFQANFRDY…ISQKFQGTLR (94 aa)).

This sequence belongs to the phenylalanyl-tRNA synthetase beta subunit family. Type 1 subfamily. As to quaternary structure, tetramer of two alpha and two beta subunits. Mg(2+) serves as cofactor.

The protein resides in the cytoplasm. The enzyme catalyses tRNA(Phe) + L-phenylalanine + ATP = L-phenylalanyl-tRNA(Phe) + AMP + diphosphate + H(+). This Rickettsia conorii (strain ATCC VR-613 / Malish 7) protein is Phenylalanine--tRNA ligase beta subunit.